Consider the following 1939-residue polypeptide: Myosin-1 (1939 aa).

The region spanning 33–82 (DAKTSVFVAEPKESFVKGTVQSREGGKVTVKTEAGATLTVKEDQVFPMNP) is the Myosin N-terminal SH3-like domain. Residues Thr-64 and Thr-69 each carry the phosphothreonine modification. Residues 86 to 782 (DKIEDMAMMT…LLGLLEEMRD (697 aa)) form the Myosin motor domain. N6,N6,N6-trimethyllysine is present on Lys-130. ATP is bound at residue 179–186 (GESGAGKT). Tyr-389 bears the Phosphotyrosine mark. Phosphothreonine is present on Thr-419. A Phosphotyrosine modification is found at Tyr-424. Residues 659–681 (LNKLMTNLRSTHPHFVRCIIPNE) form an actin-binding region. His-757 carries the pros-methylhistidine modification. Residues 761 to 775 (KFGHTKVFFKAGLLG) form an actin-binding region. The 30-residue stretch at 785–814 (LAQLITRTQARCRGFLARVEYQKMVERRES) folds into the IQ domain. The stretch at 843–1939 (LLKSAETEKE…EVHTKIISEE (1097 aa)) forms a coiled coil. 2 positions are modified to phosphoserine: Ser-1092 and Ser-1096. Disordered regions lie at residues 1125-1147 (EIEAERASRAKAEKQRSDLSREL) and 1153-1172 (RLEEAGGATSAQIEMNKKRE). The segment covering 1128–1147 (AERASRAKAEKQRSDLSREL) has biased composition (basic and acidic residues). Phosphoserine occurs at positions 1162 and 1237. Thr-1241 carries the post-translational modification Phosphothreonine. Ser-1243 is modified (phosphoserine). Thr-1255 is modified (phosphothreonine). Ser-1261 bears the Phosphoserine mark. Residues Thr-1265 and Thr-1286 each carry the phosphothreonine modification. A phosphoserine mark is found at Ser-1288, Ser-1292, Ser-1303, and Ser-1306. Residue Tyr-1464 is modified to Phosphotyrosine. Thr-1467 carries the post-translational modification Phosphothreonine. At Ser-1474 the chain carries Phosphoserine. Residue Tyr-1492 is modified to Phosphotyrosine. A Phosphoserine modification is found at Ser-1495. Position 1501 is a phosphothreonine (Thr-1501). Ser-1514 is subject to Phosphoserine. Phosphothreonine is present on Thr-1517. Residues Ser-1542, Ser-1554, Ser-1574, Ser-1600, Ser-1603, Ser-1714, and Ser-1726 each carry the phosphoserine modification. Residues Thr-1730 and Thr-1736 each carry the phosphothreonine modification. The residue at position 1739 (Ser-1739) is a Phosphoserine.

It belongs to the TRAFAC class myosin-kinesin ATPase superfamily. Myosin family. Muscle myosin is a hexameric protein that consists of 2 heavy chain subunits (MHC), 2 alkali light chain subunits (MLC) and 2 regulatory light chain subunits (MLC-2). Interacts with SLC26A5.

It localises to the cytoplasm. It is found in the myofibril. In terms of biological role, required for normal hearing. It plays a role in cochlear amplification of auditory stimuli, likely through the positive regulation of prestin (SLC26A5) activity and outer hair cell (OHC) electromotility. The protein is Myosin-1 (MYH1) of Sus scrofa (Pig).